Here is a 96-residue protein sequence, read N- to C-terminus: Co-chaperonin GroES (96 aa).

This sequence belongs to the GroES chaperonin family. Heptamer of 7 subunits arranged in a ring. Interacts with the chaperonin GroEL.

The protein localises to the cytoplasm. Functionally, together with the chaperonin GroEL, plays an essential role in assisting protein folding. The GroEL-GroES system forms a nano-cage that allows encapsulation of the non-native substrate proteins and provides a physical environment optimized to promote and accelerate protein folding. GroES binds to the apical surface of the GroEL ring, thereby capping the opening of the GroEL channel. The chain is Co-chaperonin GroES from Alcanivorax borkumensis (strain ATCC 700651 / DSM 11573 / NCIMB 13689 / SK2).